The chain runs to 688 residues: Collagen alpha-2(IX) chain (688 aa).

The N-terminal stretch at 1–22 (MAPAADPRSLLVLLQVLGLALA) is a signal peptide. The interval 26–162 (GLPGEPGPPG…PGKPGRPGTI (137 aa)) is triple-helical region 4 (COL4). Disordered regions lie at residues 26–520 (GLPG…RDAS), 549–578 (GATG…PGPR), and 590–662 (IGNT…LPGF). 2 stretches are compositionally biased toward pro residues: residues 30 to 42 (EPGP…PPGV) and 105 to 126 (LPGP…PGPV). Positions 128 to 138 (LPGEIGLTGPK) are enriched in low complexity. Positions 143 to 156 (PEGPSGPPGPPGKP) are enriched in pro residues. The residue at position 159 (Pro159) is a 4-hydroxyproline. A nonhelical region 4 (NC4) region spans residues 163–179 (QGLEGSADFLCPTNCPA). The O-linked (Xyl...) (glycosaminoglycan) serine glycan is linked to Ser168. The interval 180 to 518 (GVKGPPGLQG…PGRQGVAGRD (339 aa)) is triple-helical region 3 (COL3). At Lys182 the chain carries 5-hydroxylysine. Lys182 carries an O-linked (Gal...) hydroxylysine glycan. Low complexity-rich tracts occupy residues 251–265 (KGMV…SPGE) and 394–412 (PVGQ…EQGP). Residues 435–444 (GPRGGVGDPG) show a composition bias toward gly residues. Low complexity predominate over residues 497–506 (RGLVGDRGLP). The tract at residues 519 to 548 (ASDQHIEDVVLKMLQEQLAEMAVSAKREAL) is nonhelical region 3 (NC3). Positions 549 to 631 (GATGMMGPPG…PGLPGRPGQA (83 aa)) are triple-helical region 2 (COL2). Positions 556 to 565 (PPGPPGPPGY) are enriched in pro residues. Residues 598–610 (KRGEKGDQGEVGR) show a composition bias toward basic and acidic residues. Residues 632 to 633 (IN) are nonhelical region 2 (NC2). The segment at 634 to 663 (GKDGDRGAPGAPGEAGRPGLPGPIGLPGFC) is triple-helical region 1 (COL1). Low complexity predominate over residues 641–651 (APGAPGEAGRP). The nonhelical region 1 (NC1) stretch occupies residues 664–688 (EPAACLGASAYASGRLTEPGSIKGP).

Belongs to the fibril-associated collagens with interrupted helices (FACIT) family. In terms of assembly, heterotrimer of an alpha 1(IX), an alpha 2(IX) and an alpha 3(IX) chain. The chains are linked to each other by interchain disulfide bonds. Trimers are also cross-linked via hydroxylysines. Post-translationally, prolines at the third position of the tripeptide repeating unit (G-X-Y) are hydroxylated in some or all of the chains. In terms of processing, covalently linked to the telopeptides of type II collagen by hydroxylysine-derived cross-links.

It is found in the secreted. It localises to the extracellular space. The protein resides in the extracellular matrix. Functionally, structural component of hyaline cartilage and vitreous of the eye. The polypeptide is Collagen alpha-2(IX) chain (Bos taurus (Bovine)).